A 597-amino-acid chain; its full sequence is 66 kDa protein (597 aa).

Disordered regions lie at residues 62–82 (VRLQ…PSLQ), 160–198 (HSVP…FRQH), 218–315 (NQLA…SCRV), 329–411 (HFKS…LHHD), and 535–586 (SSPQ…ASAL). Residues 64 to 80 (LQSSPPRGPQSDRNLPS) show a composition bias toward polar residues. Positions 218–234 (NQLAQAQQHPLPSSKPL) are enriched in polar residues. Residues 273–291 (PSSRGHLPSSTSSSSPRSN) show a composition bias toward low complexity. A compositionally biased stretch (polar residues) spans 305–315 (SNSQDLRSCRV). Positions 389 to 400 (QTHHARLPHSKR) are enriched in basic residues. A compositionally biased stretch (low complexity) spans 535–574 (SSPQSHSSESLRGDSPPSSHLPSSPSSACSGDSFASCSSF). The span at 575 to 584 (GPSNPTSSAS) shows a compositional bias: polar residues.

It belongs to the tymoviridae protein p69 family.

This is 66 kDa protein from Ononis.